We begin with the raw amino-acid sequence, 80 residues long: SGHHHHDSSDEPSESSKACCDHCACTKSIPPQCRCALRLNCNHCRSCICTFSIPAQCVCTDTNDFCYEPCKSGHDDDDSG.

7 disulfides stabilise this stretch: Cys-19–Cys-70, Cys-20–Cys-35, Cys-23–Cys-66, Cys-25–Cys-33, Cys-41–Cys-47, Cys-44–Cys-59, and Cys-49–Cys-57.

In terms of assembly, occurs as a monomer, dimer or trimer. The dimer may be the active form. In terms of processing, binds calcium, probably through His-3 to His-6.

Its function is as follows. Protease inhibitor with activity against cysteine, aspartic and serine proteases. Highest activity against serine proteases, in particular trypsin and trypsin-like proteases. This Phaseolus acutifolius (Tepary bean) protein is Bowman-Birk type proteinase inhibitor.